A 100-amino-acid chain; its full sequence is EKC/KEOPS complex subunit GON7 (100 aa).

Met1 carries the N-acetylmethionine modification. Residues 50–100 (SPVQGEAQDRVAAAPEEALDGDDEDDAEDENNIDNRTNSDGPTAKRPKPPS) are disordered. Over residues 66 to 81 (EALDGDDEDDAEDENN) the composition is skewed to acidic residues.

In terms of assembly, component of the EKC/KEOPS complex composed of at least GON7, TP53RK, TPRKB, OSGEP and LAGE3; the whole complex dimerizes.

The protein resides in the nucleus. Component of the EKC/KEOPS complex that is required for the formation of a threonylcarbamoyl group on adenosine at position 37 (t(6)A37) in tRNAs that read codons beginning with adenine. The complex is probably involved in the transfer of the threonylcarbamoyl moiety of threonylcarbamoyl-AMP (TC-AMP) to the N6 group of A37. GON7 plays a supporting role to the catalytic subunit OSGEP in the complex. This Sus scrofa (Pig) protein is EKC/KEOPS complex subunit GON7.